Reading from the N-terminus, the 282-residue chain is Acetylglutamate kinase (282 aa).

Substrate-binding positions include 62–63 (GG), arginine 84, and asparagine 178.

This sequence belongs to the acetylglutamate kinase family. ArgB subfamily.

The protein resides in the cytoplasm. It catalyses the reaction N-acetyl-L-glutamate + ATP = N-acetyl-L-glutamyl 5-phosphate + ADP. The protein operates within amino-acid biosynthesis; L-arginine biosynthesis; N(2)-acetyl-L-ornithine from L-glutamate: step 2/4. Functionally, catalyzes the ATP-dependent phosphorylation of N-acetyl-L-glutamate. This Kosmotoga olearia (strain ATCC BAA-1733 / DSM 21960 / TBF 19.5.1) protein is Acetylglutamate kinase.